Consider the following 109-residue polypeptide: Con-Ins K2 (109 aa).

The first 24 residues, 1–24, serve as a signal peptide directing secretion; it reads MTTSSYFLLVALGLLLYVCQSSFG. The propeptide occupies 25 to 29; the sequence is NPHTR. 3 disulfides stabilise this stretch: Cys41–Cys90, Cys53–Cys103, and Cys89–Cys94. Glu44 is subject to 4-carboxyglutamate. A propeptide spans 57–83 (c peptide); sequence RKRRGFPSMLKARAKRNEAFLLQRDGR.

It belongs to the insulin family. As to quaternary structure, heterodimer of A and B chains; disulfide-linked. Expressed by the venom gland.

The protein localises to the secreted. In terms of biological role, this venom insulin, from a fish-hunting cone snail, facilitates prey capture by rapidly inducing hypoglycemic shock. It is one of the smallest known insulin found in nature and lacks the C-terminal segment of the B chain that, in human insulin, mediates engagement of the insulin receptor (INSR) and assembly of the hormone's hexameric storage form. Despite lacking this segment, it both binds and activates human insulin receptor (long isoform (HIR-B)) with a moderate potency (EC(50)=373.2 nM). In vivo, intraperitoneal injection of this peptide into zebrafish lowers blood glucose with a lower potency than human insulin. In addition, when applied to water, this peptide reduces overall locomotor activity of zebrafish larvae, observed as a significant decrease in the percentage of time spent swimming and movement frequency. When tested on a mouse model of diabetes, this insulin also lowers blood glucose with a 20-fold lower potency than human insulin. The sequence is that of Con-Ins K2 from Conus kinoshitai (Kinoshita's cone).